A 506-amino-acid chain; its full sequence is Maturase K (506 aa).

Belongs to the intron maturase 2 family. MatK subfamily.

It localises to the plastid. The protein localises to the chloroplast. In terms of biological role, usually encoded in the trnK tRNA gene intron. Probably assists in splicing its own and other chloroplast group II introns. The chain is Maturase K from Rhododendron hippophaeoides (Rhododendron).